We begin with the raw amino-acid sequence, 306 residues long: Mycothiol acetyltransferase (306 aa).

2 N-acetyltransferase domains span residues 17-163 (VARV…RPMP) and 166-306 (LALS…YRRA). Glutamate 48 contributes to the 1D-myo-inositol 2-(L-cysteinylamino)-2-deoxy-alpha-D-glucopyranoside binding site. An acetyl-CoA-binding site is contributed by 89-91 (IVV). Positions 192, 232, and 239 each coordinate 1D-myo-inositol 2-(L-cysteinylamino)-2-deoxy-alpha-D-glucopyranoside. Residues 243–245 (LGV) and 250–256 (AARGLGS) each bind acetyl-CoA. Tyrosine 277 lines the 1D-myo-inositol 2-(L-cysteinylamino)-2-deoxy-alpha-D-glucopyranoside pocket.

Belongs to the acetyltransferase family. MshD subfamily. Monomer.

It carries out the reaction 1D-myo-inositol 2-(L-cysteinylamino)-2-deoxy-alpha-D-glucopyranoside + acetyl-CoA = mycothiol + CoA + H(+). Catalyzes the transfer of acetyl from acetyl-CoA to desacetylmycothiol (Cys-GlcN-Ins) to form mycothiol. The sequence is that of Mycothiol acetyltransferase from Clavibacter michiganensis subsp. michiganensis (strain NCPPB 382).